An 81-amino-acid polypeptide reads, in one-letter code: Penaeidin-3c (81 aa).

A signal peptide spans 1 to 19; that stretch reads MRLVVCLVFLASFALVCQG. Q20 carries the post-translational modification Pyrrolidone carboxylic acid. Cystine bridges form between C50–C65, C54–C72, and C66–C73. At S80 the chain carries Serine amide.

The protein belongs to the penaeidin family. In terms of tissue distribution, higher expression in hemocytes and to a lesser extent in heart, testis, gills, intestine, lymphoid organ and hepatopancreas. Traces in eyes and subcuticular epithelium. Not present in the brain.

It is found in the cytoplasmic granule. Antibacterial activity against M.luteus and E.coli bacteria. Antifungal activity against N.crassa and F.oxysporum. Presents chitin-binding activity. The polypeptide is Penaeidin-3c (Penaeus vannamei (Whiteleg shrimp)).